A 456-amino-acid polypeptide reads, in one-letter code: Serine--tRNA ligase (456 aa).

The segment at 49 to 69 (HERNEVSSTIGELKQAGEEEA) is disordered. 241–243 (TAE) is a binding site for L-serine. ATP contacts are provided by residues 272–274 (RQE) and Val-288. Glu-295 serves as a coordination point for L-serine. Residue 368 to 371 (EVSS) coordinates ATP. Ser-404 provides a ligand contact to L-serine.

Belongs to the class-II aminoacyl-tRNA synthetase family. Type-1 seryl-tRNA synthetase subfamily. Homodimer. The tRNA molecule binds across the dimer.

The protein localises to the cytoplasm. The enzyme catalyses tRNA(Ser) + L-serine + ATP = L-seryl-tRNA(Ser) + AMP + diphosphate + H(+). It carries out the reaction tRNA(Sec) + L-serine + ATP = L-seryl-tRNA(Sec) + AMP + diphosphate + H(+). The protein operates within aminoacyl-tRNA biosynthesis; selenocysteinyl-tRNA(Sec) biosynthesis; L-seryl-tRNA(Sec) from L-serine and tRNA(Sec): step 1/1. Its function is as follows. Catalyzes the attachment of serine to tRNA(Ser). Is also able to aminoacylate tRNA(Sec) with serine, to form the misacylated tRNA L-seryl-tRNA(Sec), which will be further converted into selenocysteinyl-tRNA(Sec). This chain is Serine--tRNA ligase, found in Halorubrum lacusprofundi (strain ATCC 49239 / DSM 5036 / JCM 8891 / ACAM 34).